Here is a 102-residue protein sequence, read N- to C-terminus: Protein translation factor SUI1 homolog (102 aa).

Belongs to the SUI1 family.

This is Protein translation factor SUI1 homolog from Methanosarcina mazei (strain ATCC BAA-159 / DSM 3647 / Goe1 / Go1 / JCM 11833 / OCM 88) (Methanosarcina frisia).